We begin with the raw amino-acid sequence, 310 residues long: Translocator protein BipD (310 aa).

2 coiled-coil regions span residues 127–171 and 250–299; these read DPIL…LQDY and DTAR…AIST.

The protein belongs to the invasin protein D family.

It is found in the secreted. Required for invasion of epithelial cells, as well as for survival within host cells, escape from endocytic vesicles and subsequent actin-tail formation. Probably regulates the secretion of effectors BipB and BipC and their final integration into the target cell membrane. The chain is Translocator protein BipD (bipD) from Burkholderia thailandensis (strain ATCC 700388 / DSM 13276 / CCUG 48851 / CIP 106301 / E264).